The following is a 240-amino-acid chain: Adenylate dimethylallyltransferase (240 aa).

This sequence belongs to the isopentenyl transferase family.

It catalyses the reaction dimethylallyl diphosphate + AMP = N(6)-(dimethylallyl)adenosine 5'-phosphate + diphosphate. Its function is as follows. Transfers dimethylallyl groups to AMP as part of the biosynthesis of cytokinin phytohormones. This Agrobacterium tumefaciens (strain Ach5) protein is Adenylate dimethylallyltransferase (izt).